We begin with the raw amino-acid sequence, 174 residues long: Cathepsin B-like cysteine proteinase 3 (174 aa).

2 disulfides stabilise this stretch: C22/C55 and C30/C42. Active-site residues include H122 and N142.

It belongs to the peptidase C1 family.

Expression of the protease correlates with blood-feeding and suggests a role for the protease in blood digestion. This chain is Cathepsin B-like cysteine proteinase 3 (CP-3), found in Ostertagia ostertagi (Brown stomach worm).